The following is a 161-amino-acid chain: 6,7-dimethyl-8-ribityllumazine synthase (161 aa).

Residues Trp-31, 63–65, and 85–87 contribute to the 5-amino-6-(D-ribitylamino)uracil site; these read SFE and VVI. Residue 90-91 participates in (2S)-2-hydroxy-3-oxobutyl phosphate binding; sequence GT. The Proton donor role is filled by His-93. Phe-118 contacts 5-amino-6-(D-ribitylamino)uracil. A (2S)-2-hydroxy-3-oxobutyl phosphate-binding site is contributed by Arg-132.

It belongs to the DMRL synthase family.

The catalysed reaction is (2S)-2-hydroxy-3-oxobutyl phosphate + 5-amino-6-(D-ribitylamino)uracil = 6,7-dimethyl-8-(1-D-ribityl)lumazine + phosphate + 2 H2O + H(+). The protein operates within cofactor biosynthesis; riboflavin biosynthesis; riboflavin from 2-hydroxy-3-oxobutyl phosphate and 5-amino-6-(D-ribitylamino)uracil: step 1/2. Its function is as follows. Catalyzes the formation of 6,7-dimethyl-8-ribityllumazine by condensation of 5-amino-6-(D-ribitylamino)uracil with 3,4-dihydroxy-2-butanone 4-phosphate. This is the penultimate step in the biosynthesis of riboflavin. The sequence is that of 6,7-dimethyl-8-ribityllumazine synthase from Paenarthrobacter aurescens (strain TC1).